A 224-amino-acid polypeptide reads, in one-letter code: Urease accessory protein UreF (224 aa).

This sequence belongs to the UreF family. In terms of assembly, ureD, UreF and UreG form a complex that acts as a GTP-hydrolysis-dependent molecular chaperone, activating the urease apoprotein by helping to assemble the nickel containing metallocenter of UreC. The UreE protein probably delivers the nickel.

The protein resides in the cytoplasm. Its function is as follows. Required for maturation of urease via the functional incorporation of the urease nickel metallocenter. The chain is Urease accessory protein UreF from Escherichia coli O157:H7.